Consider the following 774-residue polypeptide: Fatty acid oxidation complex subunit alpha (774 aa).

Disordered stretches follow at residues 1 to 31 (MSKE…VGAS) and 617 to 641 (YLYS…RNSF). The segment at 1–224 (MSKENIVTRE…KMGLVDDVVP (224 aa)) is enoyl-CoA hydratase. 2 stretches are compositionally biased toward polar residues: residues 8 to 31 (TREN…VGAS) and 620 to 637 (SNPT…SPAK). A 3-hydroxyacyl-CoA dehydrogenase region spans residues 340–774 (RAIHRVGVLG…NIDEVTDVAS (435 aa)).

The protein in the N-terminal section; belongs to the enoyl-CoA hydratase/isomerase family. In the central section; belongs to the 3-hydroxyacyl-CoA dehydrogenase family. In terms of assembly, heterotetramer of two alpha chains (FadJ) and two beta chains (FadI).

The protein resides in the cytoplasm. It catalyses the reaction a (3S)-3-hydroxyacyl-CoA = a (2E)-enoyl-CoA + H2O. The enzyme catalyses a 4-saturated-(3S)-3-hydroxyacyl-CoA = a (3E)-enoyl-CoA + H2O. It carries out the reaction a (3S)-3-hydroxyacyl-CoA + NAD(+) = a 3-oxoacyl-CoA + NADH + H(+). The catalysed reaction is (3S)-3-hydroxybutanoyl-CoA = (3R)-3-hydroxybutanoyl-CoA. It functions in the pathway lipid metabolism; fatty acid beta-oxidation. Its function is as follows. Catalyzes the formation of a hydroxyacyl-CoA by addition of water on enoyl-CoA. Also exhibits 3-hydroxyacyl-CoA epimerase and 3-hydroxyacyl-CoA dehydrogenase activities. This is Fatty acid oxidation complex subunit alpha from Yersinia pestis (strain Pestoides F).